The following is a 684-amino-acid chain: MSAQDFLVELGTEELPPKALNTLAEAFLAGIDKGLQAAGLNYESKTVYAAPRRLAVLITALATQQPDRSINLDGPPRQAAFDADGNPTQAALGFAKKCGVELSEIDQSGPKLRYSQNIAGKPTASLLPTIVEDSLNDLPIPKRMRWGARKEEFVRPTQWLVMLLGDQIIDCTILAQKAGRESRGHRFHHPQSVRIGSPSSYLADLRAAYVLADANERREIISKRTEELATRQEGTAIVPPALLDEVTALVEWPVPLVCSFEERFLDVPQEALITTMQDNQKYFCLLDADGKLLPRFITVANIESKDPQQIIAGNEKVVRPRLTDAEFFFKQDKKQKLEAFNDRLQNVVFQEKLGSVYDKAERVSKLAAYIAARIGGNASWAARAGLLSKCDLATEMVGEFPEMQGVAGYYYALNDGEPEDVALALNEQYMPRGAGAELPATLTGAAVAIADKLDTLVGIFGIGMLPTGSKDPYALRRAALGVLRILIEKQLDLDLNDAVAFAVNAFGAKVKAAGLNDAVLEFIFDRLRARYEDEGVGVATYLSVRALKPGSALDFDQRVQAVQAFRKLPEAAALAAVNKRVSNLLSKVEGSVPTEVQAKYFDNANEFSLYSAIQQADQAVQPMAAARQYNESLARLAALREPVDAFFDAVMVNAEDANVRANRYALLARLRGLFLGVADISLLG.

The protein belongs to the class-II aminoacyl-tRNA synthetase family. Tetramer of two alpha and two beta subunits.

Its subcellular location is the cytoplasm. The catalysed reaction is tRNA(Gly) + glycine + ATP = glycyl-tRNA(Gly) + AMP + diphosphate. The protein is Glycine--tRNA ligase beta subunit of Pseudomonas fluorescens (strain Pf0-1).